Reading from the N-terminus, the 653-residue chain is Transmembrane and coiled-coil domains protein 1 (653 aa).

Methionine 1 carries the N-acetylmethionine modification. Disordered stretches follow at residues 1–35 (MEPSGSEQLFEDPDPGGKSQDAEARKQTESEQKLS), 58–78 (HQRRRSSVSPHDVQQIQADPE), 112–165 (PPKM…APTS), and 204–227 (TSSAVASSTDGSIHTDSVDGTPDP). Over 1-591 (MEPSGSEQLF…ARNLLGKLIN (591 aa)) the chain is Cytoplasmic. Positions 20 to 34 (QDAEARKQTESEQKL) are enriched in basic and acidic residues. Positions 64–74 (SVSPHDVQQIQ) are enriched in polar residues. Residues 113 to 125 (PKMKRGTSLHSRR) are compositionally biased toward basic residues. The span at 135–144 (PQINRKSGQE) shows a compositional bias: polar residues. Residues 153-165 (RPRSSSTTDAPTS) are compositionally biased toward low complexity. The segment covering 204–218 (TSSAVASSTDGSIHT) has biased composition (polar residues). Positions 228 to 313 (QRTKAAIAHL…RKLREVEQNG (86 aa)) form a coiled coil. Serine 382 and serine 414 each carry phosphoserine. The tract at residues 415-437 (PKYGSEEDCSSATSGSVGANSTT) is disordered. A compositionally biased stretch (polar residues) spans 424-437 (SSATSGSVGANSTT). Residues 458-576 (GFDALLHEIQ…QQQQVVQLEG (119 aa)) adopt a coiled-coil conformation. The next 2 helical transmembrane spans lie at 592–612 (ILLAVMAVLLVFVSTVANCVV) and 625–645 (LFLVVFIAFLWKHWDALFSYV). The Cytoplasmic segment spans residues 646–653 (ERFFSSPR).

This sequence belongs to the TEX28 family. As to quaternary structure, may form homodimers and heterodimers with TMCC2 or TMCC3 via the coiled-coil domains. Interacts with ribosomal proteins RPL4 and RPS6.

It localises to the endoplasmic reticulum membrane. In terms of biological role, endoplasmic reticulum membrane protein that promotes endoplasmic reticulum-associated endosome fission. Localizes to contact sites between the endoplasmic reticulum and endosomes and acts by promoting recruitment of the endoplasmic reticulum to endosome tubules for fission. Endosome membrane fission of early and late endosomes is essential to separate regions destined for lysosomal degradation from carriers to be recycled to the plasma membrane. The polypeptide is Transmembrane and coiled-coil domains protein 1 (Homo sapiens (Human)).